Here is an 85-residue protein sequence, read N- to C-terminus: High-potential iron-sulfur protein (85 aa).

4 residues coordinate [4Fe-4S] cluster: cysteine 43, cysteine 46, cysteine 63, and cysteine 77.

The protein belongs to the high-potential iron-sulfur protein (HiPIP) family. As to quaternary structure, homodimer.

It localises to the periplasm. Functionally, specific class of high-redox-potential 4Fe-4S ferredoxins. Functions in anaerobic electron transport in most purple and in some other photosynthetic bacteria and in at least one genus (Paracoccus) of halophilic, denitrifying bacteria. The chain is High-potential iron-sulfur protein from Allochromatium warmingii (Chromatium warmingii).